Here is a 252-residue protein sequence, read N- to C-terminus: tRNA (guanine-N(1)-)-methyltransferase (252 aa).

Residues glycine 116 and 135-140 (LGDYVL) each bind S-adenosyl-L-methionine.

Belongs to the RNA methyltransferase TrmD family. Homodimer.

It localises to the cytoplasm. It catalyses the reaction guanosine(37) in tRNA + S-adenosyl-L-methionine = N(1)-methylguanosine(37) in tRNA + S-adenosyl-L-homocysteine + H(+). Functionally, specifically methylates guanosine-37 in various tRNAs. The chain is tRNA (guanine-N(1)-)-methyltransferase from Limosilactobacillus fermentum (strain NBRC 3956 / LMG 18251) (Lactobacillus fermentum).